A 179-amino-acid chain; its full sequence is UPF0227 protein VIBHAR_01524 (179 aa).

Belongs to the UPF0227 family.

In Vibrio campbellii (strain ATCC BAA-1116), this protein is UPF0227 protein VIBHAR_01524.